Reading from the N-terminus, the 281-residue chain is Phosphatidylglycerol--prolipoprotein diacylglyceryl transferase (281 aa).

Helical transmembrane passes span 29–49, 64–84, 100–120, and 124–144; these read FYSLAYIVGIVLAYWHLGKMI, LFFYCTLGVIFGGRIGYVLFY, GGMSFHGGVIGVVLAILFVSW, and LNWLRVCDYIAVNVPFGMFLG. Residue Arg-145 coordinates a 1,2-diacyl-sn-glycero-3-phospho-(1'-sn-glycerol). The next 3 helical transmembrane spans lie at 180 to 200, 209 to 229, and 248 to 268; these read QLYQAGLEGLLMMAVMLLLFW, GVLVGVFTIGIAGARFVNEFF, and GQWLSIPMILVGLAVVVYALT.

The protein belongs to the Lgt family.

Its subcellular location is the cell inner membrane. The catalysed reaction is L-cysteinyl-[prolipoprotein] + a 1,2-diacyl-sn-glycero-3-phospho-(1'-sn-glycerol) = an S-1,2-diacyl-sn-glyceryl-L-cysteinyl-[prolipoprotein] + sn-glycerol 1-phosphate + H(+). It functions in the pathway protein modification; lipoprotein biosynthesis (diacylglyceryl transfer). Functionally, catalyzes the transfer of the diacylglyceryl group from phosphatidylglycerol to the sulfhydryl group of the N-terminal cysteine of a prolipoprotein, the first step in the formation of mature lipoproteins. The protein is Phosphatidylglycerol--prolipoprotein diacylglyceryl transferase of Erythrobacter litoralis (strain HTCC2594).